Reading from the N-terminus, the 155-residue chain is Crossover junction endodeoxyribonuclease RuvC (155 aa).

Catalysis depends on residues Asp7, Glu68, and Asp140. Residues Asp7, Glu68, and Asp140 each contribute to the Mg(2+) site.

Belongs to the RuvC family. Homodimer which binds Holliday junction (HJ) DNA. The HJ becomes 2-fold symmetrical on binding to RuvC with unstacked arms; it has a different conformation from HJ DNA in complex with RuvA. In the full resolvosome a probable DNA-RuvA(4)-RuvB(12)-RuvC(2) complex forms which resolves the HJ. The cofactor is Mg(2+).

It localises to the cytoplasm. The catalysed reaction is Endonucleolytic cleavage at a junction such as a reciprocal single-stranded crossover between two homologous DNA duplexes (Holliday junction).. Functionally, the RuvA-RuvB-RuvC complex processes Holliday junction (HJ) DNA during genetic recombination and DNA repair. Endonuclease that resolves HJ intermediates. Cleaves cruciform DNA by making single-stranded nicks across the HJ at symmetrical positions within the homologous arms, yielding a 5'-phosphate and a 3'-hydroxyl group; requires a central core of homology in the junction. The consensus cleavage sequence is 5'-(A/T)TT(C/G)-3'. Cleavage occurs on the 3'-side of the TT dinucleotide at the point of strand exchange. HJ branch migration catalyzed by RuvA-RuvB allows RuvC to scan DNA until it finds its consensus sequence, where it cleaves and resolves the cruciform DNA. The chain is Crossover junction endodeoxyribonuclease RuvC from Prochlorococcus marinus (strain SARG / CCMP1375 / SS120).